Here is a 501-residue protein sequence, read N- to C-terminus: Cystine/glutamate transporter (501 aa).

The Cytoplasmic portion of the chain corresponds to M1–K43. A Phosphoserine modification is found at S26. A helical membrane pass occupies residues V44–I64. Residues S65–G74 are Extracellular-facing. Residues S75–L95 form a helical membrane-spanning segment. The Cytoplasmic segment spans residues S96–G101. An intramembrane segment occupies T102–E116. Residues V117 to E130 are Cytoplasmic-facing. Residues L131–I150 traverse the membrane as a helical segment. R135 provides a ligand contact to L-glutamate. At L151–L163 the chain is on the extracellular side. Residues A164–L179 form a helical membrane-spanning segment. Topologically, residues N180–F193 are cytoplasmic. A helical transmembrane segment spans residues L194–V210. Topologically, residues M211 to R234 are extracellular. The helical transmembrane segment at L235 to V255 threads the bilayer. Residue Y244 participates in L-glutamate binding. At T256–T265 the chain is on the cytoplasmic side. A helical membrane pass occupies residues I266–V286. Topologically, residues A287–L317 are extracellular. N-linked (GlcNAc...) asparagine glycosylation occurs at N314. The helical transmembrane segment at A318 to V338 threads the bilayer. Topologically, residues S339–T364 are cytoplasmic. Residues P365 to L385 traverse the membrane as a helical segment. The Extracellular segment spans residues D386 to S387. A helical transmembrane segment spans residues L388–I408. The Cytoplasmic portion of the chain corresponds to Y409–K422. The helical transmembrane segment at V423 to L443 threads the bilayer. The Extracellular portion of the chain corresponds to Y444–S449. The chain crosses the membrane as a helical span at residues T450–W470. The Cytoplasmic segment spans residues D471–L501.

The protein belongs to the amino acid-polyamine-organocation (APC) superfamily. L-type amino acid transporter (LAT) (TC 2.A.3.8) family. Disulfide-linked heterodimer with the amino acid transport protein SLC3A2/4F2hc; this interaction mediates cell membrane localization.

Its subcellular location is the cell membrane. The protein resides in the cell projection. The protein localises to the microvillus membrane. The catalysed reaction is L-cystine(out) + L-glutamate(in) = L-cystine(in) + L-glutamate(out). It carries out the reaction an L-alpha-amino acid(in) + L-kynurenine(out) = an L-alpha-amino acid(out) + L-kynurenine(in). The enzyme catalyses N-acetyl-L-cysteine(out) + L-glutamate(in) = N-acetyl-L-cysteine(in) + L-glutamate(out). Heterodimer with SLC3A2, that functions as an antiporter by mediating the exchange of extracellular anionic L-cystine and intracellular L-glutamate across the cellular plasma membrane. Provides L-cystine for the maintenance of the redox balance between extracellular L-cystine and L-cysteine and for the maintenance of the intracellular levels of glutathione that is essential for cells protection from oxidative stress. The transport is sodium-independent, electroneutral with a stoichiometry of 1:1, and is drove by the high intracellular concentration of L-glutamate and the intracellular reduction of L-cystine. In addition, mediates the import of L-kynurenine leading to anti-ferroptotic signaling propagation required to maintain L-cystine and glutathione homeostasis. Moreover, mediates N-acetyl-L-cysteine uptake into the placenta leading to subsequently down-regulation of pathways associated with oxidative stress, inflammation and apoptosis. In vitro can also transport L-aspartate. May participate in astrocyte and meningeal cell proliferation during development and can provide neuroprotection by promoting glutathione synthesis and delivery from non-neuronal cells such as astrocytes and meningeal cells to immature neurons. Controls the production of pheomelanin pigment directly. The polypeptide is Cystine/glutamate transporter (Pongo abelii (Sumatran orangutan)).